Consider the following 123-residue polypeptide: uncharacterized protein (123 aa).

The residue at position 56 (threonine 56) is a Phosphothreonine. Phosphoserine is present on residues serine 73, serine 87, serine 97, serine 113, and serine 119.

Highly expressed in the kidney (at protein level).

The protein localises to the cytoplasm. This is an uncharacterized protein from Felis catus (Cat).